We begin with the raw amino-acid sequence, 117 residues long: UPF0342 protein lmo2223 (117 aa).

It belongs to the UPF0342 family.

The polypeptide is UPF0342 protein lmo2223 (Listeria monocytogenes serovar 1/2a (strain ATCC BAA-679 / EGD-e)).